The sequence spans 209 residues: Guanylate kinase (209 aa).

One can recognise a Guanylate kinase-like domain in the interval 9-188 (GIMLVMSSPS…SVQQIKSIFI (180 aa)). ATP is bound at residue 16-23 (SPSGGGKT).

It belongs to the guanylate kinase family.

It localises to the cytoplasm. It carries out the reaction GMP + ATP = GDP + ADP. Its function is as follows. Essential for recycling GMP and indirectly, cGMP. The polypeptide is Guanylate kinase (Ehrlichia ruminantium (strain Gardel)).